The primary structure comprises 291 residues: 4-diphosphocytidyl-2-C-methyl-D-erythritol kinase (291 aa).

Lysine 14 is an active-site residue. 96–106 (PFGAGLGGGSS) contacts ATP. Aspartate 138 is a catalytic residue.

The protein belongs to the GHMP kinase family. IspE subfamily.

The enzyme catalyses 4-CDP-2-C-methyl-D-erythritol + ATP = 4-CDP-2-C-methyl-D-erythritol 2-phosphate + ADP + H(+). The protein operates within isoprenoid biosynthesis; isopentenyl diphosphate biosynthesis via DXP pathway; isopentenyl diphosphate from 1-deoxy-D-xylulose 5-phosphate: step 3/6. Functionally, catalyzes the phosphorylation of the position 2 hydroxy group of 4-diphosphocytidyl-2C-methyl-D-erythritol. The polypeptide is 4-diphosphocytidyl-2-C-methyl-D-erythritol kinase (Chlorobium phaeovibrioides (strain DSM 265 / 1930) (Prosthecochloris vibrioformis (strain DSM 265))).